The chain runs to 510 residues: Cytochrome P450 monooxygenase ptmK (510 aa).

Residues 2 to 22 form a helical membrane-spanning segment; it reads IIVTFFWVGIVLSAIWTFYKV. 3 N-linked (GlcNAc...) asparagine glycosylation sites follow: Asn313, Asn408, and Asn443. Cys456 is a heme binding site.

The protein belongs to the cytochrome P450 family. Heme is required as a cofactor.

Its subcellular location is the membrane. The protein operates within secondary metabolite biosynthesis. In terms of biological role, cytochrome P450 monooxygenase; part of the gene cluster that mediates the biosynthesis of the indole diterpenes penitrems. The geranylgeranyl diphosphate (GGPP) synthase ptmG catalyzes the first step in penitrem biosynthesis via conversion of farnesyl pyrophosphate and isopentyl pyrophosphate into geranylgeranyl pyrophosphate (GGPP). Condensation of indole-3-glycerol phosphate with GGPP by the prenyl transferase ptmC then forms 3-geranylgeranylindole (3-GGI). Epoxidation by the FAD-dependent monooxygenase ptmM leads to a epoxidized-GGI that is substrate of the terpene cyclase ptmB for cyclization to yield paspaline. Paspaline is subsequently converted to 13-desoxypaxilline by the cytochrome P450 monooxygenase ptmP, the latter being then converted to paxilline by the cytochrome P450 monooxygenase ptmQ. Paxilline is converted to beta-paxitriol via C-10 ketoreduction by the short-chain dehydrogenase ptmH which can be monoprenylated at the C-20 by the indole diterpene prenyltransferase ptmD. A two-step elimination (acetylation and elimination) process performed by the O-acetyltransferase ptmV and ptmI leads to the production of the prenylated form of penijanthine. The FAD-linked oxidoreductase ptmO then converts the prenylated form of penijanthine into PC-M5 which is in turn transformed into PC-M4 by the aromatic dimethylallyltransferase ptmE. Five sequential oxidative transformations performed by the cytochrome P450 monooxygenases ptmK, ptmU, ptmL, ptmN and ptmJ yield the various penitrem compounds. PtmK, ptmU and ptmM are involved in the formation of the key bicyclic ring of penitrem C via the formation of the intermediates secopenitrem D and penitrem D. PtmL catalyzes the epoxidation of penitrem D and C to yield penitrem B and F, respectively. PtmJ catalyzes the last benzylic hydroxylation to convert penitrem B to prenitrem E and penitrem F to penitrem A. The protein is Cytochrome P450 monooxygenase ptmK of Penicillium ochrochloron.